The chain runs to 454 residues: MSYGYPGQGYGPGGGHHQPPPPQWDGQQQHHHQGGYGYSNPGQGQYNPQPPQDQGYGGYHQQPPQQYQQGSYNQGQYPPQGGYGGPYGQQQQHHQQGHSQRPPGPPPDGYDIYGYPIGSGHQTRNQGSHEIHEIPSGTQQFGHGAPEGYGFQYSNCSGRRKALLIGINYLGQDAELHGCINDTKNVSAFLVENYGYKREDMVILTDDATNPLLQPTKENILRAMQWLVAGAQPNDALFLHYSGHGGQTKDTDGDEDDGYDEVIYPVDFKTAGHIVDDQIHDTVVKPLQPGVRLTAIFDSCHSGSVLDLPYIYSTKGVIKEPNLAKEAGQGLLAAVGSYARGDIGGMASSLFSVAKTAFGGGNEAYERTKRTKTSPADVIMWSGSKDDQTSADATIASQATGAMSWAFITAIKANPKQSYVQLLNSIRDVLETKYTQKPQLSSSHPIDVDMLFVM.

Residues 1 to 16 show a composition bias toward gly residues; sequence MSYGYPGQGYGPGGGH. The tract at residues 1–129 is disordered; sequence MSYGYPGQGY…GHQTRNQGSH (129 aa). 4 stretches are compositionally biased toward low complexity: residues 38 to 47, 59 to 80, 88 to 101, and 109 to 120; these read YSNPGQGQYN, YHQQPPQQYQQGSYNQGQYPPQ, GQQQQHHQQGHSQR, and GYDIYGYPIGSG. Catalysis depends on residues histidine 244 and cysteine 300.

This sequence belongs to the peptidase C14B family.

Involved in cell death (apoptosis). In Neurospora crassa (strain ATCC 24698 / 74-OR23-1A / CBS 708.71 / DSM 1257 / FGSC 987), this protein is Metacaspase-1A (casA).